The primary structure comprises 767 residues: Cap-specific mRNA (nucleoside-2'-O-)-methyltransferase 2 (767 aa).

Residues 109–322 (ELCTQAWCKF…VYVVCLRYKG (214 aa)) enclose the Adrift-type SAM-dependent 2'-O-MTase domain. Lys117 is a catalytic residue. S-adenosyl-L-methionine-binding residues include Gly148, Trp167, and Asp235. Residue Asp235 is part of the active site. Lys275 acts as the Proton acceptor in catalysis.

Its subcellular location is the nucleus. It is found in the cytoplasm. The enzyme catalyses a 5'-end (N(7)-methyl 5'-triphosphoguanosine)-(2'-O-methyl-ribonucleoside)-(ribonucleotide) in mRNA + S-adenosyl-L-methionine = a 5'-end (N(7)-methyl 5'-triphosphoguanosine)-(2'-O-methyl-ribonucleoside)-(2'-O-methyl-ribonucleotide) in mRNA + S-adenosyl-L-homocysteine + H(+). Its function is as follows. S-adenosyl-L-methionine-dependent methyltransferase that mediates mRNA cap2 2'-O-ribose methylation to the 5'-cap structure of mRNAs. Methylates the ribose of the second nucleotide of a m(7)GpppG-capped mRNA and small nuclear RNA (snRNA) (cap0) to produce m(7)GpppRmpNm (cap2). Recognizes a guanosine cap on RNA independently of its N(7) methylation status. Display cap2 methylation on both cap0 and cap1. Displays a preference for cap1 RNAs. In Mus musculus (Mouse), this protein is Cap-specific mRNA (nucleoside-2'-O-)-methyltransferase 2 (Cmtr2).